A 118-amino-acid polypeptide reads, in one-letter code: UPF0212 protein HQ_2663A (118 aa).

Belongs to the UPF0212 family.

In Haloquadratum walsbyi (strain DSM 16790 / HBSQ001), this protein is UPF0212 protein HQ_2663A.